The primary structure comprises 274 residues: GCN5-related N-acetyltransferase 7, chloroplastic (274 aa).

A chloroplast-targeting transit peptide spans 1–65; the sequence is MAFLCSSLPS…STFVISESVS (65 aa). An N-acetyltransferase domain is found at 75-267; sequence LRVRTFNELN…QRLLLWLALP (193 aa). Residues 189–191, 197–202, 228–230, and Y235 each bind acetyl-CoA; these read VCV, RNGVGY, and NEA. Y235 serves as the catalytic Proton donor.

This sequence belongs to the acetyltransferase family. GNAT subfamily. In terms of assembly, oligomer. In terms of processing, autoacetylated. Expressed in green tissues.

The protein localises to the plastid. It localises to the chloroplast. The catalysed reaction is an N-terminal L-alpha-aminoacyl-[protein] + acetyl-CoA = N-terminal N(alpha)-acetyl-L-alpha-aminoacyl-[protein] + CoA + H(+). It catalyses the reaction L-lysyl-[protein] + acetyl-CoA = N(6)-acetyl-L-lysyl-[protein] + CoA + H(+). The enzyme catalyses N-terminal L-alanyl-[protein] + acetyl-CoA = N-terminal N(alpha)-acetyl-L-alanyl-[protein] + CoA + H(+). It carries out the reaction N-terminal L-seryl-[protein] + acetyl-CoA = N-terminal N(alpha)-acetyl-L-seryl-[protein] + CoA + H(+). The catalysed reaction is N-terminal L-threonyl-[protein] + acetyl-CoA = N-terminal N(alpha)-acetyl-L-threonyl-[protein] + CoA + H(+). It catalyses the reaction N-terminal L-methionyl-[protein] + acetyl-CoA = N-terminal N(alpha)-acetyl-L-methionyl-[protein] + CoA + H(+). The enzyme catalyses N-terminal L-prolyl-[protein] + acetyl-CoA = N-terminal N(alpha)-acetyl-L-prolyl-[protein] + CoA + H(+). It carries out the reaction N-terminal L-valyl-[protein] + acetyl-CoA = N-terminal N(alpha)-acetyl-L-valyl-[protein] + CoA + H(+). In terms of biological role, protein acetyltransferase with dual specificity triggering both N-alpha-acetylation (NTA), with a large spectrum of modified N-termini, including methionine, alanine, serine, threonine and to a lower extent valine and proline as substrates, and epsilon-lysine acetylation (KA). The chain is GCN5-related N-acetyltransferase 7, chloroplastic from Arabidopsis thaliana (Mouse-ear cress).